We begin with the raw amino-acid sequence, 602 residues long: Elongation factor 4 (602 aa).

One can recognise a tr-type G domain in the interval 6 to 188; sequence DHIRNFSIVA…AIVNKLPAPK (183 aa). GTP contacts are provided by residues 18–23 and 135–138; these read DHGKST and NKID.

It belongs to the TRAFAC class translation factor GTPase superfamily. Classic translation factor GTPase family. LepA subfamily.

Its subcellular location is the cell inner membrane. The enzyme catalyses GTP + H2O = GDP + phosphate + H(+). Its function is as follows. Required for accurate and efficient protein synthesis under certain stress conditions. May act as a fidelity factor of the translation reaction, by catalyzing a one-codon backward translocation of tRNAs on improperly translocated ribosomes. Back-translocation proceeds from a post-translocation (POST) complex to a pre-translocation (PRE) complex, thus giving elongation factor G a second chance to translocate the tRNAs correctly. Binds to ribosomes in a GTP-dependent manner. The polypeptide is Elongation factor 4 (Brucella melitensis biotype 2 (strain ATCC 23457)).